A 299-amino-acid polypeptide reads, in one-letter code: Methylsterol monooxygenase 1-2 (299 aa).

3 helical membrane passes run 39–59 (CHNILFLFLIFSLVPLPLVFI), 96–116 (FILVVGPLQLVSYPSIQMIEI), and 118–138 (SGLPLPSCMEIVAQLVVYFLV). The Fatty acid hydroxylase domain maps to 132–267 (LVVYFLVEDY…FTYCDYIYGT (136 aa)). Residues 147 to 151 (HRFFH) carry the Histidine box-1 motif. Residues 160–164 (HHIHH) carry the Histidine box-2 motif. The chain crosses the membrane as a helical span at residues 189–209 (TFLGPAIAPGHMITFWLWIAL). Positions 239–245 (YHDYHHY) match the Histidine box-3 motif.

The protein belongs to the sterol desaturase family. In terms of assembly, interacts with ACBP1. It depends on Fe cation as a cofactor. In terms of tissue distribution, expressed in embryo sacs, pollen and trichomes. Observed in leaves, roots, siliques and flowers.

It localises to the endoplasmic reticulum membrane. It catalyses the reaction 4,4-dimethyl-5alpha-cholest-7-en-3beta-ol + 6 Fe(II)-[cytochrome b5] + 3 O2 + 5 H(+) = 4alpha-carboxy-4beta-methyl-5alpha-cholest-7-ene-3beta-ol + 6 Fe(III)-[cytochrome b5] + 4 H2O. The enzyme catalyses 24-methylenecycloartanol + 6 Fe(II)-[cytochrome b5] + 3 O2 + 5 H(+) = 4alpha-carboxy-4beta,14alpha-dimethyl-9beta,19-cyclo-5alpha-ergost-24(24(1))-en-3beta-ol + 6 Fe(III)-[cytochrome b5] + 4 H2O. Non-heme iron oxygenase involved in sterols biosynthesis by catalyzing the removal of the first methyl group at the C-4 position. 4,4-dimethyl-9-beta,19-cyclopropylsterols such as 24-methylenecycloartanol are the preferred substrates. Acts as a rate-limiting enzyme in the sterol pathway via interaction with ACBP1; sterols serve as lipid modulators for gene expression of homeodomain-leucine zipper IV transcription factors. Together with SMO1-1, involved in the maintenance of sterol composition to balance auxin and cytokinin activities during embryogenesis. The sequence is that of Methylsterol monooxygenase 1-2 from Arabidopsis thaliana (Mouse-ear cress).